The primary structure comprises 131 residues: Lymphocyte antigen 6E (131 aa).

Residues 1 to 20 form the signal peptide; sequence MKIFLPVLLAALLGVERASS. In terms of domain architecture, UPAR/Ly6 spans 21–101; sequence LMCFSCLNQK…CCQSFLCNFS (81 aa). Cystine bridges form between C23–C48, C26–C35, C41–C71, C75–C92, and C93–C98. N99 carries an N-linked (GlcNAc...) asparagine glycan. The GPI-anchor amidated serine moiety is linked to residue S101. Residues 102–131 constitute a propeptide, removed in mature form; that stretch reads AADGGLRASVTLLGAGLLLSLLPALLRFGP.

Interacts with CHRNA4. Widely expressed, predominantly in liver, kidney, ovary, spleen and peripheral blood Leukocytes.

The protein resides in the cell membrane. GPI-anchored cell surface protein that regulates T-lymphocytes proliferation, differentiation, and activation. Regulates the T-cell receptor (TCR) signaling by interacting with component CD3Z/CD247 at the plasma membrane, leading to CD3Z/CD247 phosphorylation modulation. Restricts the entry of human coronaviruses, including SARS-CoV, MERS-CoV and SARS-CoV-2, by interfering with spike protein-mediated membrane fusion. Also plays an essential role in placenta formation by acting as the main receptor for syncytin-A (SynA). Therefore, participates in the normal fusion of syncytiotrophoblast layer I (SynT-I) and in the proper morphogenesis of both fetal and maternal vasculatures within the placenta. May also act as a modulator of nicotinic acetylcholine receptors (nAChRs) activity. In terms of biological role, (Microbial infection) Promotes entry, likely through an enhanced virus-cell fusion process, of various viruses including HIV-1, West Nile virus, dengue virus and Zika virus. In contrast, the paramyxovirus PIV5, which enters at the plasma membrane, does not require LY6E. Mechanistically, adopts a microtubule-like organization upon viral infection and enhances viral uncoating after endosomal escape. The polypeptide is Lymphocyte antigen 6E (Homo sapiens (Human)).